The sequence spans 214 residues: A-type ATP synthase subunit D (214 aa).

It belongs to the V-ATPase D subunit family. Has multiple subunits with at least A(3), B(3), C, D, E, F, H, I and proteolipid K(x).

Its subcellular location is the cell membrane. Its function is as follows. Component of the A-type ATP synthase that produces ATP from ADP in the presence of a proton gradient across the membrane. This chain is A-type ATP synthase subunit D, found in Pyrococcus horikoshii (strain ATCC 700860 / DSM 12428 / JCM 9974 / NBRC 100139 / OT-3).